The following is a 462-amino-acid chain: Serine--tRNA ligase, cytoplasmic (462 aa).

A Glycyl lysine isopeptide (Lys-Gly) (interchain with G-Cter in URM1) cross-link involves residue lysine 241. Position 246-248 (246-248 (TSE)) interacts with L-serine. Residues 279-281 (RRE) and valine 295 contribute to the ATP site. Glutamate 302 contributes to the L-serine binding site. Residues lysine 350 and lysine 351 each participate in a glycyl lysine isopeptide (Lys-Gly) (interchain with G-Cter in URM1) cross-link. Position 366-369 (366-369 (ELVS)) interacts with ATP. A cysteine persulfide mark is found at cysteine 373 and cysteine 400. Threonine 404 lines the L-serine pocket.

It belongs to the class-II aminoacyl-tRNA synthetase family. Type-1 seryl-tRNA synthetase subfamily. As to quaternary structure, homodimer; the tRNA molecule probably binds across the dimer. Interacts with ABP140; interaction is required for the tRNA N(3)-methylcytidine methyltransferase activity of ABP140. Conjugated to URM1, a ubiquitin-like protein, in response to oxidative stresses. The attachment of URM1 to lysine residues exclusively depends on the presence of a peroxidatic cysteine in the target protein, with low specificity for the particular residue, motif, or structural context at which urmylation can occur. The URM1-conjugation reaction is mechanistically and directly coupled to the process of cysteine persulfidation, transfering the sulfur atom of the URM1 thiocarboxyl group to redox-active cysteine residues in the target protein if it is exposed to oxidative conditions. Post-translationally, persulfidated on specific redox-active cysteine residues. Persulfidation (also called protein S-sulfhydration) may provide a molecular mechanism that enables cells to protect vulnerable cysteine residues from reactive oxygen species (ROS) under stress conditions.

Its subcellular location is the cytoplasm. It is found in the cytosol. It catalyses the reaction tRNA(Ser) + L-serine + ATP = L-seryl-tRNA(Ser) + AMP + diphosphate + H(+). In terms of biological role, catalyzes the attachment of serine to tRNA(Ser) in a two-step reaction: serine is first activated by ATP to form Ser-AMP and then transferred to the acceptor end of tRNA(Ser). The chain is Serine--tRNA ligase, cytoplasmic (SES1) from Saccharomyces cerevisiae (strain ATCC 204508 / S288c) (Baker's yeast).